A 337-amino-acid polypeptide reads, in one-letter code: 5-formaminoimidazole-4-carboxamide-1-(beta)-D-ribofuranosyl 5'-monophosphate synthetase (337 aa).

The 5-amino-1-(5-phospho-beta-D-ribosyl)imidazole-4-carboxamide site is built by histidine 14 and serine 74. The ATP-grasp domain maps to 81 to 328 (VELVERMKVP…IAREIRLAIE (248 aa)). ATP is bound by residues 125–185 (PDDI…VPVY) and glutamate 207. Asparagine 235 contributes to the 5-amino-1-(5-phospho-beta-D-ribosyl)imidazole-4-carboxamide binding site. The Mg(2+) site is built by glutamate 273 and glutamate 286.

The protein belongs to the phosphohexose mutase family. Mg(2+) is required as a cofactor. Requires Mn(2+) as cofactor.

The enzyme catalyses 5-amino-1-(5-phospho-beta-D-ribosyl)imidazole-4-carboxamide + formate + ATP = 5-formamido-1-(5-phospho-D-ribosyl)imidazole-4-carboxamide + ADP + phosphate. The protein operates within purine metabolism; IMP biosynthesis via de novo pathway; 5-formamido-1-(5-phospho-D-ribosyl)imidazole-4-carboxamide from 5-amino-1-(5-phospho-D-ribosyl)imidazole-4-carboxamide (formate route): step 1/1. Its function is as follows. Catalyzes the ATP- and formate-dependent formylation of 5-aminoimidazole-4-carboxamide-1-beta-d-ribofuranosyl 5'-monophosphate (AICAR) to 5-formaminoimidazole-4-carboxamide-1-beta-d-ribofuranosyl 5'-monophosphate (FAICAR) in the absence of folates. The chain is 5-formaminoimidazole-4-carboxamide-1-(beta)-D-ribofuranosyl 5'-monophosphate synthetase from Pyrococcus abyssi (strain GE5 / Orsay).